A 229-amino-acid polypeptide reads, in one-letter code: Lipoprotein-releasing system ATP-binding protein LolD (229 aa).

Positions 6–226 (LELKSVDRHY…TLSDGRVVEL (221 aa)) constitute an ABC transporter domain. An ATP-binding site is contributed by 42–49 (APSGTGKS).

It belongs to the ABC transporter superfamily. Lipoprotein translocase (TC 3.A.1.125) family. In terms of assembly, the complex is composed of two ATP-binding proteins (LolD) and two transmembrane proteins (LolC and LolE).

The protein resides in the cell inner membrane. Its function is as follows. Part of the ABC transporter complex LolCDE involved in the translocation of mature outer membrane-directed lipoproteins, from the inner membrane to the periplasmic chaperone, LolA. Responsible for the formation of the LolA-lipoprotein complex in an ATP-dependent manner. This Chelativorans sp. (strain BNC1) protein is Lipoprotein-releasing system ATP-binding protein LolD.